A 550-amino-acid polypeptide reads, in one-letter code: Calcyphosin-2 (550 aa).

Disordered regions lie at residues 1–20 and 175–198; these read MVPP…DNFS and ISDP…DSER. Residues 181–190 are compositionally biased toward polar residues; it reads DLNTKNQESS. EF-hand domains are found at residues 379–414, 415–452, and 453–488; these read RILT…FHLE, VSEQ…EMNE, and YRKS…KKHP. Asp466, Asn468, Thr470, and Asp477 together coordinate Ca(2+).

This chain is Calcyphosin-2 (Caps2), found in Mus musculus (Mouse).